The following is a 211-amino-acid chain: Nucleoside triphosphate pyrophosphatase (211 aa).

Asp-78 functions as the Proton acceptor in the catalytic mechanism.

Belongs to the Maf family. It depends on a divalent metal cation as a cofactor.

It localises to the cytoplasm. The enzyme catalyses a ribonucleoside 5'-triphosphate + H2O = a ribonucleoside 5'-phosphate + diphosphate + H(+). It catalyses the reaction a 2'-deoxyribonucleoside 5'-triphosphate + H2O = a 2'-deoxyribonucleoside 5'-phosphate + diphosphate + H(+). In terms of biological role, nucleoside triphosphate pyrophosphatase. May have a dual role in cell division arrest and in preventing the incorporation of modified nucleotides into cellular nucleic acids. This is Nucleoside triphosphate pyrophosphatase from Mycolicibacterium smegmatis (strain ATCC 700084 / mc(2)155) (Mycobacterium smegmatis).